A 132-amino-acid chain; its full sequence is Phosphoribosyl-AMP cyclohydrolase (132 aa).

Asp76 is a Mg(2+) binding site. Residue Cys77 participates in Zn(2+) binding. Positions 78 and 80 each coordinate Mg(2+). The Zn(2+) site is built by Cys93 and Cys100.

It belongs to the PRA-CH family. As to quaternary structure, homodimer. It depends on Mg(2+) as a cofactor. Zn(2+) is required as a cofactor.

The protein localises to the cytoplasm. It catalyses the reaction 1-(5-phospho-beta-D-ribosyl)-5'-AMP + H2O = 1-(5-phospho-beta-D-ribosyl)-5-[(5-phospho-beta-D-ribosylamino)methylideneamino]imidazole-4-carboxamide. The protein operates within amino-acid biosynthesis; L-histidine biosynthesis; L-histidine from 5-phospho-alpha-D-ribose 1-diphosphate: step 3/9. In terms of biological role, catalyzes the hydrolysis of the adenine ring of phosphoribosyl-AMP. This chain is Phosphoribosyl-AMP cyclohydrolase, found in Methanobrevibacter smithii (strain ATCC 35061 / DSM 861 / OCM 144 / PS).